The chain runs to 432 residues: Serine hydroxymethyltransferase (432 aa).

Residues L117 and 121–123 (GHL) each bind (6S)-5,6,7,8-tetrahydrofolate. K226 carries the post-translational modification N6-(pyridoxal phosphate)lysine. 366-368 (SPF) lines the (6S)-5,6,7,8-tetrahydrofolate pocket.

This sequence belongs to the SHMT family. In terms of assembly, homodimer. It depends on pyridoxal 5'-phosphate as a cofactor.

The protein resides in the cytoplasm. It catalyses the reaction (6R)-5,10-methylene-5,6,7,8-tetrahydrofolate + glycine + H2O = (6S)-5,6,7,8-tetrahydrofolate + L-serine. It functions in the pathway one-carbon metabolism; tetrahydrofolate interconversion. Its pathway is amino-acid biosynthesis; glycine biosynthesis; glycine from L-serine: step 1/1. Catalyzes the reversible interconversion of serine and glycine with tetrahydrofolate (THF) serving as the one-carbon carrier. This reaction serves as the major source of one-carbon groups required for the biosynthesis of purines, thymidylate, methionine, and other important biomolecules. Also exhibits THF-independent aldolase activity toward beta-hydroxyamino acids, producing glycine and aldehydes, via a retro-aldol mechanism. In Salinibacter ruber (strain DSM 13855 / M31), this protein is Serine hydroxymethyltransferase.